The chain runs to 107 residues: MKNLGNLMKQAQQMQSKMAEMQATMAEMEVTGSSGAGMLQVTLNGKYELKKVKIDPSLVDPSDVEVLEDLILAAFNDAKAKAEAAMAEEMAKMTGGLNLPPGFKLPF.

It belongs to the YbaB/EbfC family. Homodimer.

It is found in the cytoplasm. The protein resides in the nucleoid. In terms of biological role, binds to DNA and alters its conformation. May be involved in regulation of gene expression, nucleoid organization and DNA protection. The chain is Nucleoid-associated protein amb4104 from Paramagnetospirillum magneticum (strain ATCC 700264 / AMB-1) (Magnetospirillum magneticum).